A 422-amino-acid chain; its full sequence is Serpin A11 (422 aa).

Residues 1 to 24 form the signal peptide; the sequence is MGPVWLWLLIAELLLPVHYQPSSA. The interval 25 to 45 is disordered; sequence HGDKSLGAPQPASHQSLEPAP. 4 N-linked (GlcNAc...) asparagine glycosylation sites follow: Asn106, Asn169, Asn350, and Asn385.

It belongs to the serpin family.

The protein resides in the secreted. This Rattus norvegicus (Rat) protein is Serpin A11 (Serpina11).